Reading from the N-terminus, the 93-residue chain is Small ribosomal subunit protein uS19 (93 aa).

A disordered region spans residues 1-23 (MPRSLKKGPFVDDHLQKKVDAEN). Over residues 9 to 23 (PFVDDHLQKKVDAEN) the composition is skewed to basic and acidic residues.

This sequence belongs to the universal ribosomal protein uS19 family.

Its function is as follows. Protein S19 forms a complex with S13 that binds strongly to the 16S ribosomal RNA. This is Small ribosomal subunit protein uS19 from Nocardioides sp. (strain ATCC BAA-499 / JS614).